Reading from the N-terminus, the 103-residue chain is Protein S100-A16 (103 aa).

The EF-hand 1; degenerate domain maps to 12 to 47 (VVVLVENFYKYVSKHSLVKNKISKSSFRKMLQKELN). One can recognise an EF-hand 2 domain in the interval 54-89 (GNRKAADKLIQNLDANHDGRISFDEYWTLIGGITSP). The Ca(2+) site is built by aspartate 67, asparagine 69, aspartate 71, arginine 73, and glutamate 78.

It belongs to the S-100 family. In terms of assembly, homodimer. Interacts with TP53.

Its subcellular location is the nucleus. The protein localises to the nucleolus. It localises to the cytoplasm. In terms of biological role, calcium-binding protein. Binds one calcium ion per monomer. Can promote differentiation of adipocytes (in vitro). Overexpression in preadipocytes increases their proliferation, enhances adipogenesis and reduces insulin-stimulated glucose uptake. In Bos taurus (Bovine), this protein is Protein S100-A16 (S100A16).